Consider the following 264-residue polypeptide: Thymidylate synthase (264 aa).

A dUMP-binding site is contributed by Arg-21. His-51 is a (6R)-5,10-methylene-5,6,7,8-tetrahydrofolate binding site. 126–127 (RR) contributes to the dUMP binding site. Cys-146 serves as the catalytic Nucleophile. DUMP contacts are provided by residues 166–169 (RSAD), Asn-177, and 207–209 (HLY). A (6R)-5,10-methylene-5,6,7,8-tetrahydrofolate-binding site is contributed by Asp-169. Ala-263 is a binding site for (6R)-5,10-methylene-5,6,7,8-tetrahydrofolate.

Belongs to the thymidylate synthase family. Bacterial-type ThyA subfamily. As to quaternary structure, homodimer.

It localises to the cytoplasm. The enzyme catalyses dUMP + (6R)-5,10-methylene-5,6,7,8-tetrahydrofolate = 7,8-dihydrofolate + dTMP. It participates in pyrimidine metabolism; dTTP biosynthesis. Catalyzes the reductive methylation of 2'-deoxyuridine-5'-monophosphate (dUMP) to 2'-deoxythymidine-5'-monophosphate (dTMP) while utilizing 5,10-methylenetetrahydrofolate (mTHF) as the methyl donor and reductant in the reaction, yielding dihydrofolate (DHF) as a by-product. This enzymatic reaction provides an intracellular de novo source of dTMP, an essential precursor for DNA biosynthesis. This Bdellovibrio bacteriovorus (strain ATCC 15356 / DSM 50701 / NCIMB 9529 / HD100) protein is Thymidylate synthase.